The sequence spans 341 residues: uncharacterized protein (341 aa).

This is an uncharacterized protein from Treponema pallidum (strain Nichols).